The chain runs to 267 residues: GTP cyclohydrolase FolE2 (267 aa).

This sequence belongs to the GTP cyclohydrolase IV family.

The enzyme catalyses GTP + H2O = 7,8-dihydroneopterin 3'-triphosphate + formate + H(+). It functions in the pathway cofactor biosynthesis; 7,8-dihydroneopterin triphosphate biosynthesis; 7,8-dihydroneopterin triphosphate from GTP: step 1/1. Its function is as follows. Converts GTP to 7,8-dihydroneopterin triphosphate. The sequence is that of GTP cyclohydrolase FolE2 from Geobacter sp. (strain M21).